A 196-amino-acid chain; its full sequence is Probable malonic semialdehyde reductase RutE (196 aa).

Belongs to the nitroreductase family. HadB/RutE subfamily. Requires FMN as cofactor.

It carries out the reaction 3-hydroxypropanoate + NADP(+) = 3-oxopropanoate + NADPH + H(+). Its function is as follows. May reduce toxic product malonic semialdehyde to 3-hydroxypropionic acid, which is excreted. The chain is Probable malonic semialdehyde reductase RutE from Klebsiella pneumoniae (strain 342).